Reading from the N-terminus, the 255-residue chain is Hydroxyacylglutathione hydrolase (255 aa).

Zn(2+) is bound by residues His56, His58, Asp60, His61, His114, Asp133, and His171.

It belongs to the metallo-beta-lactamase superfamily. Glyoxalase II family. In terms of assembly, monomer. Requires Zn(2+) as cofactor.

It catalyses the reaction an S-(2-hydroxyacyl)glutathione + H2O = a 2-hydroxy carboxylate + glutathione + H(+). The protein operates within secondary metabolite metabolism; methylglyoxal degradation; (R)-lactate from methylglyoxal: step 2/2. In terms of biological role, thiolesterase that catalyzes the hydrolysis of S-D-lactoyl-glutathione to form glutathione and D-lactic acid. The sequence is that of Hydroxyacylglutathione hydrolase from Rhodopseudomonas palustris (strain ATCC BAA-98 / CGA009).